Consider the following 276-residue polypeptide: NADPH-dependent 7-cyano-7-deazaguanine reductase (276 aa).

83–85 (IES) is a substrate binding site. An NADPH-binding site is contributed by 85-86 (SK). Residue Cys184 is the Thioimide intermediate of the active site. The active-site Proton donor is Asp191. Residue 223 to 224 (HE) coordinates substrate. Residue 252–253 (RG) coordinates NADPH.

It belongs to the GTP cyclohydrolase I family. QueF type 2 subfamily. In terms of assembly, homodimer.

Its subcellular location is the cytoplasm. The catalysed reaction is 7-aminomethyl-7-carbaguanine + 2 NADP(+) = 7-cyano-7-deazaguanine + 2 NADPH + 3 H(+). The protein operates within tRNA modification; tRNA-queuosine biosynthesis. Functionally, catalyzes the NADPH-dependent reduction of 7-cyano-7-deazaguanine (preQ0) to 7-aminomethyl-7-deazaguanine (preQ1). The polypeptide is NADPH-dependent 7-cyano-7-deazaguanine reductase (Pseudomonas fluorescens (strain SBW25)).